The following is a 225-amino-acid chain: Ribosomal RNA large subunit methyltransferase E (225 aa).

Residues Gly-64, Trp-66, Asp-93, Asp-109, and Asp-138 each coordinate S-adenosyl-L-methionine. Lys-178 serves as the catalytic Proton acceptor.

The protein belongs to the class I-like SAM-binding methyltransferase superfamily. RNA methyltransferase RlmE family.

The protein resides in the cytoplasm. It catalyses the reaction uridine(2552) in 23S rRNA + S-adenosyl-L-methionine = 2'-O-methyluridine(2552) in 23S rRNA + S-adenosyl-L-homocysteine + H(+). In terms of biological role, specifically methylates the uridine in position 2552 of 23S rRNA at the 2'-O position of the ribose in the fully assembled 50S ribosomal subunit. The chain is Ribosomal RNA large subunit methyltransferase E from Cupriavidus pinatubonensis (strain JMP 134 / LMG 1197) (Cupriavidus necator (strain JMP 134)).